Here is a 118-residue protein sequence, read N- to C-terminus: Class I hydrophobin hum2 (118 aa).

The N-terminal stretch at 1–19 is a signal peptide; it reads MQFKTIFATLAAFAAVASA. Disulfide bonds link cysteine 33-cysteine 98, cysteine 40-cysteine 92, cysteine 41-cysteine 74, and cysteine 99-cysteine 112.

This sequence belongs to the fungal hydrophobin family. As to quaternary structure, self-assembles to form functional amyloid fibrils called rodlets. Self-assembly into fibrillar rodlets occurs spontaneously at hydrophobic:hydrophilic interfaces and the rodlets further associate laterally to form amphipathic monolayers.

The protein localises to the secreted. It is found in the cell wall. Its function is as follows. Aerial growth, conidiation, and dispersal of filamentous fungi in the environment rely upon a capability of their secreting small amphipathic proteins called hydrophobins (HPBs) with low sequence identity. Class I can self-assemble into an outermost layer of rodlet bundles on aerial cell surfaces, conferring cellular hydrophobicity that supports fungal growth, development and dispersal; whereas Class II form highly ordered films at water-air interfaces through intermolecular interactions but contribute nothing to the rodlet structure. Hum2 is a class I hydrophobin which that plays a role in, but seems not to be crucial for the formation of aerial hyphae. Hydrophobins of Mycosarcoma maydis have been functionally replaced, at least partially, by repellents. The protein is Class I hydrophobin hum2 of Mycosarcoma maydis (Corn smut fungus).